A 183-amino-acid polypeptide reads, in one-letter code: Lipid droplet coating protein mpl1 (183 aa).

This sequence belongs to the perilipin family.

It is found in the lipid droplet. In terms of biological role, lipid droplet coating protein that regulates lipid metabolism, appressorial turgor pressure, and virulence. Appressorial turgor pressure is important for breaching the insect cuticle during infection. This chain is Lipid droplet coating protein mpl1, found in Metarhizium robertsii (strain ARSEF 23 / ATCC MYA-3075) (Metarhizium anisopliae (strain ARSEF 23)).